A 127-amino-acid polypeptide reads, in one-letter code: Cold-regulated protein 1 (127 aa).

Residues Ala-39 to Arg-127 are disordered. A compositionally biased stretch (basic residues) spans Ser-85 to Met-101. Residues Pro-102–Pro-121 show a composition bias toward low complexity.

This Hordeum vulgare (Barley) protein is Cold-regulated protein 1.